Here is a 377-residue protein sequence, read N- to C-terminus: N-acetyldiaminopimelate deacetylase (377 aa).

The active site involves Asp-69. The active-site Proton acceptor is the Glu-128.

Belongs to the peptidase M20A family. N-acetyldiaminopimelate deacetylase subfamily.

It catalyses the reaction N-acetyl-(2S,6S)-2,6-diaminopimelate + H2O = (2S,6S)-2,6-diaminopimelate + acetate. The protein operates within amino-acid biosynthesis; L-lysine biosynthesis via DAP pathway; LL-2,6-diaminopimelate from (S)-tetrahydrodipicolinate (acetylase route): step 3/3. In terms of biological role, catalyzes the conversion of N-acetyl-diaminopimelate to diaminopimelate and acetate. The polypeptide is N-acetyldiaminopimelate deacetylase (Brevibacillus brevis (strain 47 / JCM 6285 / NBRC 100599)).